The sequence spans 24 residues: Humanin-like 6 (24 aa).

This sequence belongs to the humanin family. As to expression, expressed in skeletal muscle and testis.

It localises to the secreted. It is found in the cytoplasm. Its function is as follows. Plays a role as a neuroprotective and antiapoptotic factor. This is Humanin-like 6 from Homo sapiens (Human).